Consider the following 335-residue polypeptide: MIDQKIFETTLNIDDPANFCTNVEAHLLKELENIYVGKCFKNSFILNITGVIQRSPCFIMRTNNSGRGYMHVRFSALVSCLNAFDLIAAVKIIKNDSNIILGESLLTEPVTIVIPSSESQNNVAEVGQIVPVQLANSSVYYIPGRQQASATGSIFIPKHTFSVYHVQEELTQEQALNLTKLVNIIEMLLESRSKKDFKQICFFEKLYYTYSINSDEILDLKIWKGPKGKEMARLKPCNVLSFLYDALKNKSSSLGFWARPPDLFKSSPLAYQQDQNSFNTTELPIICSAEVMFVTLLKEIINYLQFMNDLCDTFNNEQLIKRHENIWMLIEQKKI.

It belongs to the Asfivirus DNA-directed RNA polymerase RPB7 homolog family. In terms of assembly, part of the viral DNA-directed RNA polymerase that consists of 8 polII-like subunits (RPB1, RPB2, RPB3, RPB5, RPB6, RPB7, RPB9, RPB10), a capping enzyme and a termination factor.

It localises to the host cytoplasm. It is found in the virion. Functionally, component of the DNA-directed RNA polymerase (RNAP) that catalyzes the transcription in the cytoplasm of viral DNA into RNA using the four ribonucleoside triphosphates as substrates. This chain is DNA-directed RNA polymerase RPB7 homolog, found in Ornithodoros (relapsing fever ticks).